We begin with the raw amino-acid sequence, 334 residues long: Histo-blood group ABO system transferase 2 (334 aa).

Residues Met-1 to His-15 lie on the Cytoplasmic side of the membrane. A helical; Signal-anchor for type II membrane protein membrane pass occupies residues Leu-16–Leu-36. Over Arg-37 to Asn-334 the chain is Lumenal. An N-linked (GlcNAc...) asparagine glycan is attached at Asn-94. Residues Phe-102–Val-104, Tyr-107, and Asp-192–Asp-194 contribute to the UDP-N-acetyl-alpha-D-galactosamine site. Mn(2+) is bound by residues Asp-192 and Asp-194. An alpha-L-fucosyl-(1-&gt;2)-beta-D-galactosyl derivative is bound by residues His-214, Thr-226, Glu-284, and Asp-307. Residue Glu-284 is the Nucleophile of the active site.

This sequence belongs to the glycosyltransferase 6 family. Requires Mn(2+) as cofactor. Large intestine, caecum, stomach, pancreas, submaxillary gland and kidney (at protein level). Ubiquitous.

It is found in the golgi apparatus. It localises to the golgi stack membrane. The protein localises to the secreted. The catalysed reaction is an alpha-L-fucosyl-(1-&gt;2)-beta-D-galactosyl derivative + UDP-N-acetyl-alpha-D-galactosamine = an N-acetyl-alpha-D-galactosaminyl-(1-&gt;3)-[alpha-L-fucosyl-(1-&gt;2)]-beta-D-galactosyl derivative + UDP + H(+). It carries out the reaction an alpha-L-fucosyl-(1-&gt;2)-beta-D-galactosyl derivative + UDP-alpha-D-galactose = an alpha-D-galactosyl-(1-&gt;3)-[alpha-L-fucosyl-(1-&gt;2)]-beta-D-galactosyl derivative + UDP + H(+). Its pathway is protein modification; protein glycosylation. Its function is as follows. Possesses strong B transferase activity and weak A transferase activity. This chain is Histo-blood group ABO system transferase 2 (Abo2), found in Rattus norvegicus (Rat).